The sequence spans 100 residues: Noncompact myelin-associated protein (100 aa).

The Extracellular portion of the chain corresponds to 1 to 28 (MTTATTLGDAVFSLNMTRGEDILYKSSG). Residues 29-49 (AIVAAIVVVVVIIVTLVLILL) form a helical membrane-spanning segment. The Cytoplasmic portion of the chain corresponds to 50 to 100 (KMYNRRMRTRRELEPKSPKPPVPPALDPNSNGSQQPAAVTSDPADVPVETR). Residues 58–100 (TRRELEPKSPKPPVPPALDPNSNGSQQPAAVTSDPADVPVETR) are disordered. Polar residues predominate over residues 77-87 (PNSNGSQQPAA).

Post-translationally, glycosylated. Expressed in the peripheral nervous system Schwann cells (at protein level).

The protein resides in the cell membrane. Its function is as follows. Plays a role in myelin formation. The sequence is that of Noncompact myelin-associated protein (Ncmap) from Rattus norvegicus (Rat).